The chain runs to 1036 residues: Cellulose synthase-like protein D1 (1036 aa).

Residues 1–99 (MASSPPKKTL…GGGDGPKMGN (99 aa)) are disordered. 2 stretches are compositionally biased toward polar residues: residues 9 to 19 (TLNSQSSSLSR) and 69 to 80 (NQPAGSSGSTSE). Over residues 86 to 95 (NRGGGGGDGP) the composition is skewed to gly residues. Helical transmembrane passes span 178-198 (ILSP…FFLW) and 208-228 (AMWL…SWIL). Residue D308 is part of the active site. Positions 626-665 (AMHVRTQSQASQTSQASDLESDTQPLNDDPDLGLPKKFGN) are disordered. A compositionally biased stretch (low complexity) spans 631–642 (TQSQASQTSQAS). D741 is a catalytic residue. 6 helical membrane-spanning segments follow: residues 817 to 837 (IYPF…LCLF), 848 to 868 (IHFL…SLLE), 895 to 915 (LAAV…SFTL), 938 to 958 (GLFI…VIGA), 962 to 982 (IYSV…SLWV), and 1002 to 1022 (TIVY…WITI).

It belongs to the glycosyltransferase 2 family. Plant cellulose synthase-like D subfamily.

The protein localises to the golgi apparatus membrane. Functionally, thought to be a Golgi-localized beta-glycan synthase that polymerize the backbones of noncellulosic polysaccharides (hemicelluloses) of plant cell wall. The chain is Cellulose synthase-like protein D1 (CSLD1) from Arabidopsis thaliana (Mouse-ear cress).